The chain runs to 558 residues: Transcription termination factor MTEF18, mitochondrial (558 aa).

Residues 1–58 constitute a mitochondrion transit peptide; it reads MFMVRLKFASISHNFSTVAAKHRRVPSKYKSLAIGKAQQAITDYLHTTRSLSYTHAEQ.

This sequence belongs to the mTERF family.

Its subcellular location is the mitochondrion. Its function is as follows. Transcription termination factor involved in the regulation of mitochondrial-encoded gene expression. Essential for normal plant growth and development. In Arabidopsis thaliana (Mouse-ear cress), this protein is Transcription termination factor MTEF18, mitochondrial.